The following is a 729-amino-acid chain: Phosphoribosylformylglycinamidine synthase subunit PurL (729 aa).

Histidine 54 is an active-site residue. Residues tyrosine 57 and lysine 96 each coordinate ATP. A Mg(2+)-binding site is contributed by glutamate 98. Substrate is bound by residues serine 99–histidine 102 and arginine 121. Histidine 100 acts as the Proton acceptor in catalysis. Aspartate 122 contributes to the Mg(2+) binding site. Glutamine 245 serves as a coordination point for substrate. A Mg(2+)-binding site is contributed by aspartate 273. Glutamate 317–glutamine 319 contacts substrate. 2 residues coordinate ATP: aspartate 495 and glycine 532. Position 533 (asparagine 533) interacts with Mg(2+). Serine 535 is a substrate binding site.

The protein belongs to the FGAMS family. Monomer. Part of the FGAM synthase complex composed of 1 PurL, 1 PurQ and 2 PurS subunits.

It is found in the cytoplasm. The catalysed reaction is N(2)-formyl-N(1)-(5-phospho-beta-D-ribosyl)glycinamide + L-glutamine + ATP + H2O = 2-formamido-N(1)-(5-O-phospho-beta-D-ribosyl)acetamidine + L-glutamate + ADP + phosphate + H(+). It functions in the pathway purine metabolism; IMP biosynthesis via de novo pathway; 5-amino-1-(5-phospho-D-ribosyl)imidazole from N(2)-formyl-N(1)-(5-phospho-D-ribosyl)glycinamide: step 1/2. Part of the phosphoribosylformylglycinamidine synthase complex involved in the purines biosynthetic pathway. Catalyzes the ATP-dependent conversion of formylglycinamide ribonucleotide (FGAR) and glutamine to yield formylglycinamidine ribonucleotide (FGAM) and glutamate. The FGAM synthase complex is composed of three subunits. PurQ produces an ammonia molecule by converting glutamine to glutamate. PurL transfers the ammonia molecule to FGAR to form FGAM in an ATP-dependent manner. PurS interacts with PurQ and PurL and is thought to assist in the transfer of the ammonia molecule from PurQ to PurL. The protein is Phosphoribosylformylglycinamidine synthase subunit PurL of Staphylococcus saprophyticus subsp. saprophyticus (strain ATCC 15305 / DSM 20229 / NCIMB 8711 / NCTC 7292 / S-41).